The sequence spans 86 residues: Kappa-theraphotoxin-Cg1a 5 (86 aa).

The N-terminal stretch at 1–21 (MKVSVLITLAVLGVMFVWTSA) is a signal peptide. The propeptide occupies 22 to 50 (AELEERGSDQRDSPAWLKSMERIFQSEER). Intrachain disulfides connect cysteine 52–cysteine 66, cysteine 59–cysteine 71, and cysteine 65–cysteine 78. The residue at position 84 (phenylalanine 84) is a Phenylalanine amide.

It belongs to the neurotoxin 10 (Hwtx-1) family. 28 (Jztx-11) subfamily. Expressed by the venom gland.

It is found in the secreted. Its function is as follows. This toxin acts as a voltage-dependent gating-modifier. It inhibits the sodium conductance (IC(50)=124 nM) and slows the fast inactivation (EC(50)=1180 nM) of Nav1.5/SCN5A. It significantly shifts the activation to more depolarized voltages and decreases the deactivation of Nav1.5 currents upon extreme depolarization, but only slightly affects voltage-dependence of steady-state inactivation. In addition, this toxin causes an approximately five-fold decrease in the rate of recovery from inactivation and an approximately 1.9-fold reduction in the closed-state inactivation rate. This toxin integrates the functions of site 3 toxins (alpha-scorpion toxins) with site 4 toxins (beta-scorpion and spider toxins) by targeting multiple sites on Nav1.5. Also shows inhibition of voltage-gated potassium channels (5 uM completely inhibits Kv2.1/KCNB1, whereas 5 uM moderately inhibits Kv4.2/KCND2 Kv4.1/KCND1 channels). This is Kappa-theraphotoxin-Cg1a 5 from Chilobrachys guangxiensis (Chinese earth tiger tarantula).